The primary structure comprises 361 residues: Putative agmatine deiminase (361 aa).

The Amidino-cysteine intermediate role is filled by C354.

The protein belongs to the agmatine deiminase family.

It catalyses the reaction agmatine + H2O = N-carbamoylputrescine + NH4(+). The sequence is that of Putative agmatine deiminase from Streptococcus pneumoniae (strain Taiwan19F-14).